Consider the following 1576-residue polypeptide: DExH-box ATP-dependent RNA helicase DExH2 (1576 aa).

The R3H domain occupies 15 to 78; it reads EATGAWATKV…ERRLSLFKGD (64 aa). The Helicase ATP-binding domain occupies 227–396; that stretch reads ISAVESNQVV…FGGCPVVRVP (170 aa). 240-247 contacts ATP; it reads GETGCGKT. The DEIH box signature appears at 343 to 346; the sequence is DEIH. In terms of domain architecture, Helicase C-terminal spans 561–735; sequence LIVKLMKKIC…ELCLQVKMLD (175 aa). 3 disordered regions span residues 1137–1165, 1177–1223, and 1260–1576; these read ATSP…MGSK, MEES…SLNN, and DMGN…PSDQ. A compositionally biased stretch (polar residues) spans 1281-1301; it reads PNSANSMDLGNMEENTPSDLA. Residues 1305–1319 show a composition bias toward basic and acidic residues; it reads KKKEPKSVSKLDLGS. A PH1 motif is present at residues 1349–1360; it reads KQPEKKRSRSKK. Positions 1352–1363 are enriched in basic residues; that stretch reads EKKRSRSKKRKS. Positions 1381–1412 are enriched in polar residues; the sequence is ANENEQTEPKSANNLDLGNMKENTPSDLANEN. The PH2 motif lies at 1454–1465; the sequence is KQPKKKRSRSKK. Basic residues predominate over residues 1455–1467; the sequence is QPKKKRSRSKKCK. A compositionally biased stretch (basic and acidic residues) spans 1490 to 1508; the sequence is EQKDPESVNRLDPGKEKES. A compositionally biased stretch (polar residues) spans 1509–1524; that stretch reads IPSNLVSGNEQPDSNT. The segment covering 1528–1537 has biased composition (basic residues); it reads KKPKKKKRKL. Residues 1530 to 1537 carry the Nuclear localization signal motif; sequence PKKKKRKL. Over residues 1540–1562 the composition is skewed to polar residues; that stretch reads NFDSVNNMEEKMPSTNVLSQGNK.

Belongs to the DExH box helicase family. In terms of assembly, homodimer.

It is found in the nucleus. It catalyses the reaction ATP + H2O = ADP + phosphate + H(+). Functionally, may function as an ATP-dependent RNA/DNA helicase. Binds DNA in vitro in a non-specific manner. The sequence is that of DExH-box ATP-dependent RNA helicase DExH2 from Arabidopsis thaliana (Mouse-ear cress).